The following is a 311-amino-acid chain: Syntaxin-111 (311 aa).

Residues Met-1–Lys-284 lie on the Cytoplasmic side of the membrane. The t-SNARE coiled-coil homology domain occupies Val-213 to Ala-275. The chain crosses the membrane as a helical; Anchor for type IV membrane protein span at residues Trp-285 to Ala-305. Residues Thr-306–Ser-311 lie on the Vesicular side of the membrane.

It belongs to the syntaxin family. As to expression, expressed in roots and panicles.

The protein resides in the cell membrane. It is found in the cytoplasm. Vesicle trafficking protein that functions in the secretory pathway. This is Syntaxin-111 from Oryza sativa subsp. japonica (Rice).